Consider the following 80-residue polypeptide: N-V protease (80 aa).

Belongs to the peptidase S8 family. Monomer. Body cavity.

The protein localises to the secreted. Its activity is regulated as follows. Inhibited by the serine protease inhibitors DFP, PMSF and TLCK. Not inhibited by the serine protease inhibitors aprotinin, elastinal, SBTI and benzamidine, the cysteine protease inhibitors iodoacetate and E64, or the metalloprotease inhibitors EDTA and EGTA. Functionally, serine protease. Hydrolyzes the alpha chains of fibrin and fibrinogen completely, has lower activity on the beta and gamma chains of fibrin and fibrinogen. In Alitta virens (Sandworm), this protein is N-V protease.